Consider the following 466-residue polypeptide: Asparagine--tRNA ligase (466 aa).

The protein belongs to the class-II aminoacyl-tRNA synthetase family. In terms of assembly, homodimer.

The protein localises to the cytoplasm. It carries out the reaction tRNA(Asn) + L-asparagine + ATP = L-asparaginyl-tRNA(Asn) + AMP + diphosphate + H(+). This Shewanella baltica (strain OS185) protein is Asparagine--tRNA ligase.